Here is a 438-residue protein sequence, read N- to C-terminus: Enolase 1 (438 aa).

Positions 160 and 169 each coordinate substrate. Glutamate 212 functions as the Proton donor in the catalytic mechanism. Residues aspartate 247, glutamate 296, and aspartate 321 each contribute to the Mg(2+) site. Residues glutamate 296 and aspartate 321 each contribute to the substrate site. Lysine 346 serves as the catalytic Proton acceptor. Substrate is bound by residues 373 to 376 and lysine 397; that span reads SHRS.

This sequence belongs to the enolase family. In terms of assembly, homodimer. The cofactor is Mg(2+).

It localises to the cytoplasm. The enzyme catalyses (2R)-2-phosphoglycerate = phosphoenolpyruvate + H2O. Its pathway is carbohydrate degradation; glycolysis; pyruvate from D-glyceraldehyde 3-phosphate: step 4/5. This chain is Enolase 1 (ENO1), found in Candida glabrata (strain ATCC 2001 / BCRC 20586 / JCM 3761 / NBRC 0622 / NRRL Y-65 / CBS 138) (Yeast).